A 454-amino-acid chain; its full sequence is tRNA modification GTPase MnmE (454 aa).

The (6S)-5-formyl-5,6,7,8-tetrahydrofolate site is built by Arg-23, Glu-80, and Lys-120. In terms of domain architecture, TrmE-type G spans 216-377 (GMKVVIAGRP…LRNHLKQSMG (162 aa)). K(+) is bound at residue Asn-226. GTP contacts are provided by residues 226-231 (NAGKSS), 245-251 (TDIAGTT), 270-273 (DTAG), 335-338 (NKAD), and 358-360 (SAR). Ser-230 is a Mg(2+) binding site. 3 residues coordinate K(+): Thr-245, Ile-247, and Thr-250. Mg(2+) is bound at residue Thr-251. Lys-454 provides a ligand contact to (6S)-5-formyl-5,6,7,8-tetrahydrofolate.

The protein belongs to the TRAFAC class TrmE-Era-EngA-EngB-Septin-like GTPase superfamily. TrmE GTPase family. As to quaternary structure, homodimer. Heterotetramer of two MnmE and two MnmG subunits. The cofactor is K(+).

The protein localises to the cytoplasm. Exhibits a very high intrinsic GTPase hydrolysis rate. Involved in the addition of a carboxymethylaminomethyl (cmnm) group at the wobble position (U34) of certain tRNAs, forming tRNA-cmnm(5)s(2)U34. The polypeptide is tRNA modification GTPase MnmE (Shigella flexneri serotype 5b (strain 8401)).